Here is a 226-residue protein sequence, read N- to C-terminus: Uracil-DNA glycosylase (226 aa).

The active-site Proton acceptor is the D68.

Belongs to the uracil-DNA glycosylase (UDG) superfamily. UNG family.

It localises to the cytoplasm. It catalyses the reaction Hydrolyzes single-stranded DNA or mismatched double-stranded DNA and polynucleotides, releasing free uracil.. Its function is as follows. Excises uracil residues from the DNA which can arise as a result of misincorporation of dUMP residues by DNA polymerase or due to deamination of cytosine. This is Uracil-DNA glycosylase from Mycobacteroides abscessus (strain ATCC 19977 / DSM 44196 / CCUG 20993 / CIP 104536 / JCM 13569 / NCTC 13031 / TMC 1543 / L948) (Mycobacterium abscessus).